Here is a 482-residue protein sequence, read N- to C-terminus: Transcription factor Sox-9 (482 aa).

Disordered stretches follow at residues Met-1–Asp-66 and Arg-160–Val-274. Over residues Ser-30 to Ser-41 the composition is skewed to low complexity. A compositionally biased stretch (polar residues) spans Asp-42–Thr-52. Basic and acidic residues-rich tracts occupy residues Gly-56–Asp-66 and Arg-160–Tyr-174. Lys-61 is covalently cross-linked (Glycyl lysine isopeptide (Lys-Gly) (interchain with G-Cter in SUMO)). The interval Glu-63–Pro-103 is dimerization (DIM). A PQA region spans residues Glu-63–Pro-103. The HMG box DNA-binding region spans Val-105–Lys-173. Residues Ser-211–Glu-220 are compositionally biased toward polar residues. Residues Pro-224 to Gly-308 form a transactivation domain (TAM) region. 2 short sequence motifs (9aaTAD) span residues Ile-276–Ser-285 and Asp-291–Leu-299. Positions Phe-295 to Ser-395 are disordered. Polar residues-rich tracts occupy residues Gly-308–Ala-326 and His-351–Arg-366. The transactivation domain (TAC) stretch occupies residues Arg-366–Pro-482. Residue Lys-370 forms a Glycyl lysine isopeptide (Lys-Gly) (interchain with G-Cter in SUMO) linkage. Low complexity predominate over residues Ser-375–Gln-390. Residues Ser-433–Tyr-441 carry the 9aaTAD 3 motif. The interval Pro-448 to Pro-482 is disordered. Over residues Gly-458 to Pro-482 the composition is skewed to polar residues.

Interacts with the sumoylation factors ube2i/ubc9 and sumo1. In terms of processing, sumoylated. Lys-370 is the major site of sumoylation, although sumoylation at Lys-61 also occurs. Sumoylation plays a key role in regulating formation of the neural crest and otic placode. In terms of tissue distribution, expressed in both male and female gonads from after metamorphosis through to adult stages. In the testis, expression is restricted to the supporting Sertoli-like cells. Conversely in the ovary, expression is localized to primary oocytes (at protein level). In developing limbs, expressed before chrondrocytes form (stage 52 tadpoles) and throughout the cartilaginous anlagen until stage 56, after which expression ceases in the enlarged cells of the diaphysis. At later stages, expression continues in the chondrocytes of the epiphysis and metaphysis, and weak expression is seen in most of the diaphysis.

The protein localises to the nucleus. It is found in the cytoplasm. In terms of biological role, transcription factor that plays a key role in chondrocytes differentiation and skeletal development. Specifically binds the 5'-ACAAAG-3' DNA motif present in enhancers and super-enhancers and promotes expression of genes important for chondrogenesis, including COL2A1. Plays a central role in successive steps of chondrocyte differentiation. Absolutely required for precartilaginous condensation, the first step in chondrogenesis during which skeletal progenitors differentiate into prechondrocytes. Together with SOX5 and SOX6, required for overt chondrogenesis when condensed prechondrocytes differentiate into early stage chondrocytes, the second step in chondrogenesis. Later, required to direct hypertrophic maturation and block osteoblast differentiation of growth plate chondrocytes: maintains chondrocyte columnar proliferation, delays prehypertrophy and then prevents osteoblastic differentiation of chondrocytes. Also required for chondrocyte hypertrophy, both indirectly, by keeping the lineage fate of chondrocytes, and directly, by remaining present in upper hypertrophic cells. Low lipid levels are the main nutritional determinant for chondrogenic commitment of skeletal progenitor cells: when lipids levels are low, FOXO transcription factors promote expression of SOX9, which induces chondrogenic commitment and suppresses fatty acid oxidation. In addition to cartilage development, also acts as a regulator of proliferation and differentiation in epithelial stem/progenitor cells. Unlikely to play a role in sex determination but may function during testicular and ovarian differentiation. This is Transcription factor Sox-9 from Xenopus tropicalis (Western clawed frog).